A 359-amino-acid chain; its full sequence is MDLISFKEKDISKKECLELFLDTENFFDILKVADDIRKESVGDTVTYVLNANINFTNVCSGTCKFCAFKTEKEDPNSFFLNPDKVAEKALLARKTGATEVCIQGGLLPEIDTYFQAEILQKVKKITEKYGGIDIHAFSPMEVKSAAENCGLNVKEALKILKDSGLKTMPGTAAEILNDEIRNEICPTKLTTSEWIDVVKTAHKNGIKTTCTMMYGHIEENVHLVEHLSILKEIQKETSGFTEFVPLTFLHENAPLHHIGKVKSGASGILDLKVYAISRIFFKNYLKNIQTSWVKLGIKLSQISLNCGANDVGGTLMEESISKAAGGSFGTCMSEEKLKNMILNVNKIPKKRNTLYELIN.

The Radical SAM core domain occupies 45–282; that stretch reads VTYVLNANIN…VYAISRIFFK (238 aa). Positions 59, 63, and 66 each coordinate [4Fe-4S] cluster.

Belongs to the radical SAM superfamily. CofH family. Consists of two subunits, CofG and CofH. Requires [4Fe-4S] cluster as cofactor.

The enzyme catalyses 5-amino-6-(D-ribitylamino)uracil + L-tyrosine + S-adenosyl-L-methionine = 5-amino-5-(4-hydroxybenzyl)-6-(D-ribitylimino)-5,6-dihydrouracil + 2-iminoacetate + 5'-deoxyadenosine + L-methionine + H(+). The protein operates within cofactor biosynthesis; coenzyme F0 biosynthesis. In terms of biological role, catalyzes the radical-mediated synthesis of 5-amino-5-(4-hydroxybenzyl)-6-(D-ribitylimino)-5,6-dihydrouracil from 5-amino-6-(D-ribitylamino)uracil and L-tyrosine. In Methanococcus vannielii (strain ATCC 35089 / DSM 1224 / JCM 13029 / OCM 148 / SB), this protein is 5-amino-6-(D-ribitylamino)uracil--L-tyrosine 4-hydroxyphenyl transferase.